The sequence spans 598 residues: Beta-fructofuranosidase, insoluble isoenzyme 2 (598 aa).

The N-terminal stretch at methionine 1–alanine 25 is a signal peptide. Residue aspartate 69 is part of the active site. Residues asparagine 164, asparagine 189, and asparagine 348 are each glycosylated (N-linked (GlcNAc...) asparagine).

It belongs to the glycosyl hydrolase 32 family. In terms of tissue distribution, expressed in leaves and flowers. Weakly expressed in seeds. Expressed in growing roots, node and the rapidly elongating zone of the internode.

It localises to the secreted. The protein localises to the cell wall. The catalysed reaction is Hydrolysis of terminal non-reducing beta-D-fructofuranoside residues in beta-D-fructofuranosides.. Cell wall-associated invertase that cleaves sucrose into glucose and fructose and is required for assimilated carbon partitioning during early grain-filling. May be involved in sucrose unloaded in the ovular and stylar vascular tissues for the stimulation of starch synthesis in the developing endosperm during grain-filling. Sugar homeostasis mediated by CIN2/GIF1 plays an important role in constitutive and induced physical and chemical defense against pathogens. This chain is Beta-fructofuranosidase, insoluble isoenzyme 2 (CIN2), found in Oryza sativa subsp. japonica (Rice).